Here is a 292-residue protein sequence, read N- to C-terminus: 4-hydroxy-tetrahydrodipicolinate synthase (292 aa).

Thr45 is a binding site for pyruvate. Residue Tyr133 is the Proton donor/acceptor of the active site. Catalysis depends on Lys161, which acts as the Schiff-base intermediate with substrate. Residue Ile203 participates in pyruvate binding.

Belongs to the DapA family. Homotetramer; dimer of dimers.

Its subcellular location is the cytoplasm. It catalyses the reaction L-aspartate 4-semialdehyde + pyruvate = (2S,4S)-4-hydroxy-2,3,4,5-tetrahydrodipicolinate + H2O + H(+). It functions in the pathway amino-acid biosynthesis; L-lysine biosynthesis via DAP pathway; (S)-tetrahydrodipicolinate from L-aspartate: step 3/4. Functionally, catalyzes the condensation of (S)-aspartate-beta-semialdehyde [(S)-ASA] and pyruvate to 4-hydroxy-tetrahydrodipicolinate (HTPA). This Sodalis glossinidius (strain morsitans) protein is 4-hydroxy-tetrahydrodipicolinate synthase.